The chain runs to 153 residues: Lipoprotein signal peptidase (153 aa).

2 helical membrane passes run 61–81 and 85–105; these read YFFV…LVKN and SLWL…NFID. Catalysis depends on residues Asp-114 and Asp-130. Residues 125–145 traverse the membrane as a helical segment; it reads IFNVADSYLTVGVLLLILILW.

Belongs to the peptidase A8 family.

It localises to the cell membrane. It catalyses the reaction Release of signal peptides from bacterial membrane prolipoproteins. Hydrolyzes -Xaa-Yaa-Zaa-|-(S,diacylglyceryl)Cys-, in which Xaa is hydrophobic (preferably Leu), and Yaa (Ala or Ser) and Zaa (Gly or Ala) have small, neutral side chains.. Its pathway is protein modification; lipoprotein biosynthesis (signal peptide cleavage). Functionally, this protein specifically catalyzes the removal of signal peptides from prolipoproteins. The sequence is that of Lipoprotein signal peptidase from Streptococcus thermophilus (strain CNRZ 1066).